The primary structure comprises 244 residues: uncharacterized protein (244 aa).

Residues 1 to 127 (MSGPQGSDPR…YPGQYGPYGQ (127 aa)) form a disordered region. A compositionally biased stretch (polar residues) spans 34-43 (WQQQPTQEAT). Low complexity-rich tracts occupy residues 45 to 75 (QAPA…YAQP) and 88 to 127 (PGQY…PYGQ). Residues 136–156 (VAVIGGVIAVMAVLFIGAVLI) form a helical membrane-spanning segment.

The protein localises to the membrane. This is an uncharacterized protein from Mycobacterium tuberculosis (strain CDC 1551 / Oshkosh).